A 208-amino-acid chain; its full sequence is Large ribosomal subunit protein uL3 (208 aa).

Gln149 carries the post-translational modification N5-methylglutamine.

The protein belongs to the universal ribosomal protein uL3 family. Part of the 50S ribosomal subunit. Forms a cluster with proteins L14 and L19. In terms of processing, methylated by PrmB.

One of the primary rRNA binding proteins, it binds directly near the 3'-end of the 23S rRNA, where it nucleates assembly of the 50S subunit. The sequence is that of Large ribosomal subunit protein uL3 from Histophilus somni (strain 129Pt) (Haemophilus somnus).